Here is a 595-residue protein sequence, read N- to C-terminus: Isoprene synthase, chloroplastic (595 aa).

The N-terminal 37 residues, Met1–Arg37, are a transit peptide targeting the chloroplast. Asp345 lines the dimethylallyl diphosphate pocket. Mg(2+) is bound by residues Asp345 and Asp349. Residues Asp345–Asp349 carry the DDXXD motif motif. Positions 423, 486, and 489 each coordinate dimethylallyl diphosphate. The Mg(2+) site is built by Asn489, Ser493, and Glu497.

The protein belongs to the terpene synthase family. Tpsb subfamily. Mg(2+) is required as a cofactor. As to expression, predominantly expressed in leaves.

It localises to the plastid. The protein resides in the chloroplast. The enzyme catalyses dimethylallyl diphosphate = isoprene + diphosphate. It participates in terpene metabolism. Functionally, lyase that catalyzes the formation of isoprene from dimethylallyl diphosphate, but not from isopentenyl diphosphate or geranyl diphosphate. This chain is Isoprene synthase, chloroplastic, found in Populus alba (White poplar).